Here is a 364-residue protein sequence, read N- to C-terminus: FMNH(2)-dependent dimethylsulfone monooxygenase (364 aa).

It belongs to the SsuD family.

It carries out the reaction dimethyl sulfone + FMNH2 + O2 = methanesulfinate + FMN + formaldehyde + H2O + 2 H(+). Functionally, involved in the dimethyl sulfide degradation pathway. Catalyzes the oxidation of dimethylsulfone (DMSO2) to yield methanesulfinate, which is oxidized spontaneously to methanesulfonate in the presence of dioxygen and FMNH(2). This chain is FMNH(2)-dependent dimethylsulfone monooxygenase, found in Pseudomonas fluorescens (strain Pf0-1).